Reading from the N-terminus, the 397-residue chain is CCA-adding enzyme (397 aa).

Positions 26 and 29 each coordinate ATP. CTP contacts are provided by Gly26 and Arg29. Mg(2+) is bound by residues Asp39 and Asp41. The ATP site is built by Arg110, Asp153, Arg156, Arg159, and Arg162. Residues Arg110, Asp153, Arg156, Arg159, and Arg162 each coordinate CTP.

Belongs to the tRNA nucleotidyltransferase/poly(A) polymerase family. Bacterial CCA-adding enzyme type 3 subfamily. Homodimer. Mg(2+) is required as a cofactor.

It carries out the reaction a tRNA precursor + 2 CTP + ATP = a tRNA with a 3' CCA end + 3 diphosphate. The enzyme catalyses a tRNA with a 3' CCA end + 2 CTP + ATP = a tRNA with a 3' CCACCA end + 3 diphosphate. Catalyzes the addition and repair of the essential 3'-terminal CCA sequence in tRNAs without using a nucleic acid template. Adds these three nucleotides in the order of C, C, and A to the tRNA nucleotide-73, using CTP and ATP as substrates and producing inorganic pyrophosphate. tRNA 3'-terminal CCA addition is required both for tRNA processing and repair. Also involved in tRNA surveillance by mediating tandem CCA addition to generate a CCACCA at the 3' terminus of unstable tRNAs. While stable tRNAs receive only 3'-terminal CCA, unstable tRNAs are marked with CCACCA and rapidly degraded. This is CCA-adding enzyme from Bacillus cereus (strain 03BB102).